The sequence spans 122 residues: Large ribosomal subunit protein uL14 (122 aa).

The protein belongs to the universal ribosomal protein uL14 family. As to quaternary structure, part of the 50S ribosomal subunit. Forms a cluster with proteins L3 and L19. In the 70S ribosome, L14 and L19 interact and together make contacts with the 16S rRNA in bridges B5 and B8.

Its function is as follows. Binds to 23S rRNA. Forms part of two intersubunit bridges in the 70S ribosome. The protein is Large ribosomal subunit protein uL14 of Hydrogenovibrio crunogenus (strain DSM 25203 / XCL-2) (Thiomicrospira crunogena).